The following is a 271-amino-acid chain: GPN-loop GTPase 3 (271 aa).

13–18 serves as a coordination point for GTP; it reads GAGKST. The Gly-Pro-Asn (GPN)-loop; involved in dimer interface signature appears at 70-72; it reads GPN. A GTP-binding site is contributed by 173-176; the sequence is SKLD.

This sequence belongs to the GPN-loop GTPase family. In terms of assembly, heterodimers with GPN1 or GPN2. Binds to RNA polymerase II (RNAPII).

Functionally, small GTPase required for proper nuclear import of RNA polymerase II and III (RNAPII and RNAPIII). May act at an RNAP assembly step prior to nuclear import. The chain is GPN-loop GTPase 3 from Kluyveromyces lactis (strain ATCC 8585 / CBS 2359 / DSM 70799 / NBRC 1267 / NRRL Y-1140 / WM37) (Yeast).